Consider the following 173-residue polypeptide: ATP synthase subunit delta (173 aa).

This sequence belongs to the ATPase delta chain family. In terms of assembly, F-type ATPases have 2 components, F(1) - the catalytic core - and F(0) - the membrane proton channel. F(1) has five subunits: alpha(3), beta(3), gamma(1), delta(1), epsilon(1). F(0) has three main subunits: a(1), b(2) and c(10-14). The alpha and beta chains form an alternating ring which encloses part of the gamma chain. F(1) is attached to F(0) by a central stalk formed by the gamma and epsilon chains, while a peripheral stalk is formed by the delta and b chains.

It localises to the cell inner membrane. In terms of biological role, f(1)F(0) ATP synthase produces ATP from ADP in the presence of a proton or sodium gradient. F-type ATPases consist of two structural domains, F(1) containing the extramembraneous catalytic core and F(0) containing the membrane proton channel, linked together by a central stalk and a peripheral stalk. During catalysis, ATP synthesis in the catalytic domain of F(1) is coupled via a rotary mechanism of the central stalk subunits to proton translocation. This protein is part of the stalk that links CF(0) to CF(1). It either transmits conformational changes from CF(0) to CF(1) or is implicated in proton conduction. The chain is ATP synthase subunit delta from Campylobacter jejuni subsp. doylei (strain ATCC BAA-1458 / RM4099 / 269.97).